Consider the following 283-residue polypeptide: Foldase protein PrsA 3 (283 aa).

The signal sequence occupies residues 1–21; sequence MKKKKIFIGTIISCVMLALSA. Cysteine 22 carries N-palmitoyl cysteine lipidation. Cysteine 22 carries the S-diacylglycerol cysteine lipid modification. In terms of domain architecture, PpiC spans 132–222; that stretch reads KPEMKVSHIL…YGYHIIKVTD (91 aa).

Belongs to the PrsA family.

It localises to the cell membrane. The catalysed reaction is [protein]-peptidylproline (omega=180) = [protein]-peptidylproline (omega=0). In terms of biological role, plays a major role in protein secretion by helping the post-translocational extracellular folding of several secreted proteins. This Bacillus cereus (strain ATCC 14579 / DSM 31 / CCUG 7414 / JCM 2152 / NBRC 15305 / NCIMB 9373 / NCTC 2599 / NRRL B-3711) protein is Foldase protein PrsA 3 (prsA3).